Reading from the N-terminus, the 1635-residue chain is MATAGGSGQPLCSGPPARTSALPAKKEFDVDTLSKAELRMLLSVMEGELEARDVVIEALRARRKEVFIQERYGRFNLNDPFLALQRDYEAGAGEAEKKPVCTNPLSILEAVMAHCRKMQERMSAQLAAAESRQKKLEMEKSQLHVLQQEHRKLSARLEDERGKNKQVVLMLVKECKQLSSKVGEEGEKLEEAASKLDAEKRKTGELEGALSAERQKSSQMEARMEKQLSEFDTEREQLRAKLSREEALTADLREEIDKMRKTIEQLRKGNDHKPSLSLPRGKAKDRRSVSVSVGTEGPASRAAACQTDPVVEGADPVKKPPVAVPAKPSSAGPLASGTTKGGVGKPSVGRQFSHGDLLTSSSPSIPGPPRIQENGPSSGSTPEPTGSALMPLLNNAPPPAASQNHSLTSSTPNLHSPCANAASYPALNPRVQAARFRFQGNANDQDQNGNTTQSPPSREVSPTSRDNLVVRQLARNTVTQALSRFTGPQAGAPASPRAPHPGEGGTGPPSGGRASAKTPNAPRVDRGNPPPIPPKKPGLSQTPSPPHPQLKVLKDSGRPANAGAKVDSKTGVPPPSAPPHGIRVMNEENLAKSSSPQPPPKPAGDLAPAVPAGCALPAVAASQVGACLGCNPGPSQPACSESSHAIPTAIACSSSINPVSASSCAPWASHSLLVAASGWPPSLTPLLTSCGPVSLGGRPTRLHQAAAQGNVTLLSVLLNEEGLDINHACEDGSSALYSAAKNGHTDCVRLLLNANAQVDDADKNGFTPLCSAAAQGHVKCAELLIAYHADINHAAEGGQTPLYLACKNGNNECIKLLLEAGTDRSITTSDGWTPVHAAVDSGNVDSLTLLMYYGGPESENSGSKDQTGLGSREESRGAMPVISADLINQADKEGWTAAHIAASKGLKNCLEILCGHGRLEAERKDKCDRTAHDVATDDCKHLLENLNALKISVRISVGEKQPAVCGSDDFEAENTICALNIRKQTSWDDFSKAVSQAVTNHFQAISSDGWKRLEDLTFNNATESSVGLSVSSILSVKLGSVTWSTGQSFSQPPWDFLQKNKVEHVTVFLSGPQEGCLSSVTYASMIPLQMLQNYLRLVEQYHNVVFHGPEGSLQDYIAHQIALCLKHKQTAAGFPCEIVKAEVDTNFSKEQLVELFINSACLIPVKQPPVSKKVIVILENLEKASLSELLGDFLAPLENRSSENPYTFQKGNGVANSYYFHENCFLVGTIAKSCLQGSDLLVQQHFRWVQLRWDGEPIHGLLQRFLRRKVMNKFRGKVPSPCDPVCKIIDWILTVWHQLNSCLSRLGTPEALIGPRYFLSCPVVPGHAHVTVKWMSKLWNAVIAPKVQEAILSRASVKRPAVRPSPSQGQQAVVKAALSILLNKAILHGCPLPRAELDQYMAEFRSGCFPLSMVSSYSGSHRKKGESGSWRKVNTSPRKKSGLSSSQTWTKQEATKDGVRNDTGHQNGNSIASLVKQKSLENGHPQVLHLDQRLSLGSDDEVDLVRELQSMCSSKSESDISKIADSKDDFRMFGSSRTDPDPEFSPTMSDRSLPSSEKEVCPLSSNPTLECSNNTPKPESGVSRVKSFLPVPRNKVAQCSPNPKRSNSSSSSNTRQREINNNLKEEFWVLRKNIQ.

4 disordered regions span residues 1 to 20 (MATAGGSGQPLCSGPPARTS), 193 to 219 (ASKLDAEKRKTGELEGALSAERQKSSQ), 264 to 469 (EQLR…DNLV), and 483 to 582 (SRFT…PHGI). Residues 116-273 (RKMQERMSAQ…EQLRKGNDHK (158 aa)) are a coiled coil. Composition is skewed to basic and acidic residues over residues 193 to 205 (ASKLDAEKRKTGE) and 264 to 274 (EQLRKGNDHKP). Low complexity-rich tracts occupy residues 320-331 (PPVAVPAKPSSA) and 375-395 (GPSSGSTPEPTGSALMPLLNN). Residues 402–414 (SQNHSLTSSTPNL) show a composition bias toward polar residues. Positions 439 to 453 (QGNANDQDQNGNTTQ) are enriched in low complexity. A compositionally biased stretch (polar residues) spans 454–466 (SPPSREVSPTSRD). Arginine 484 carries the post-translational modification Asymmetric dimethylarginine. ANK repeat units lie at residues 697-727 (GRPTRLHQAAAQGNVTLLSVLLNEEGLDINH), 731-760 (DGSSALYSAAKNGHTDCVRLLLNANAQVDD), 764-793 (NGFTPLCSAAAQGHVKCAELLIAYHADINH), 797-826 (GGQTPLYLACKNGNNECIKLLLEAGTDRSI), 830-859 (DGWTPVHAAVDSGNVDSLTLLMYYGGPESE), and 893-923 (EGWTAAHIAASKGLKNCLEILCGHGRLEAER). Residues 856–876 (PESENSGSKDQTGLGSREESR) form a disordered region. The segment covering 858–869 (SENSGSKDQTGL) has biased composition (polar residues). Residues 1420 to 1469 (SHRKKGESGSWRKVNTSPRKKSGLSSSQTWTKQEATKDGVRNDTGHQNGN) form a disordered region. Residues 1432–1452 (KVNTSPRKKSGLSSSQTWTKQ) show a composition bias toward polar residues. The span at 1453–1463 (EATKDGVRNDT) shows a compositional bias: basic and acidic residues. Serine 1498 is modified (phosphoserine). A disordered region spans residues 1531-1624 (RMFGSSRTDP…RQREINNNLK (94 aa)). Composition is skewed to polar residues over residues 1546 to 1555 (PTMSDRSLPS) and 1563 to 1577 (LSSNPTLECSNNTPK). The span at 1615–1624 (RQREINNNLK) shows a compositional bias: basic and acidic residues.

In terms of assembly, interacts with CTTN/cortactin SH3 domain. Interacts with STRN, STRN4/zinedin and MOB4/phocein; this interactions mediate the association with the STRIPAK core complex and may regulate dendritic spine distribution of the STRIPAK complex in hippocampal neurons. Activation of glutamate receptors weakens the interaction with STRN and STRN4.

It localises to the cytoplasm. It is found in the cell cortex. The protein localises to the cell projection. The protein resides in the dendritic spine. Functionally, regulates the dendritic spine distribution of CTTN/cortactin in hippocampal neurons, and thus controls dendritic spinogenesis and dendritic spine maintenance. Associates with the striatin-interacting phosphatase and kinase (STRIPAK) core complex to regulate dendritic spine distribution of the STRIPAK complex in hippocampal neurons. This Ornithorhynchus anatinus (Duckbill platypus) protein is Cortactin-binding protein 2 (CTTNBP2).